Consider the following 245-residue polypeptide: MNKNIKYSQNFLTSEKVLNQIIKQLNLKETDTVYEIGTGKGHLTTKLAKISKQVTSIELDSHLFNLSSEKLKLNIRVTLIHQDILQFQFPNKQRYKIVGNIPYHLSTQIIKKVVFESHASDIYLIVEEGFYKRTLDIHRTLGLLLHTQVSIQQLLKLPAECFHPKPKVNSVLIKLTRHTTDVPDKYWKLYTYFVSKWVNREYRQLFTKNQFHQAMKHAKVNNLSTVTYEQVLSIFNSYLLFNGRK.

Residues Asn-10, Leu-12, Gly-37, Glu-58, Asp-83, and Asn-100 each contribute to the S-adenosyl-L-methionine site.

This sequence belongs to the class I-like SAM-binding methyltransferase superfamily. rRNA adenine N(6)-methyltransferase family.

It carries out the reaction adenosine(2085) in 23S rRNA + 2 S-adenosyl-L-methionine = N(6)-dimethyladenosine(2085) in 23S rRNA + 2 S-adenosyl-L-homocysteine + 2 H(+). This protein produces a dimethylation of the adenine residue at position 2085 in 23S rRNA, resulting in reduced affinity between ribosomes and macrolide-lincosamide-streptogramin B antibiotics. This Enterococcus faecalis (strain ATCC 700802 / V583) protein is rRNA adenine N-6-methyltransferase (ermB).